A 122-amino-acid polypeptide reads, in one-letter code: Early nodulin-10 (122 aa).

A signal peptide spans 1–36; it reads MTCTLKSPPKMASFFLSSLVLMFIAALILLPQGLAA. 10 repeat units span residues 45-49, 51-55, 58-62, 68-72, 77-81, 82-86, 88-92, 99-103, 106-110, and 113-117. Residues 45–117 form a 10 X 5 AA approximate repeats of P-P-X-X-X region; it reads PPDSELPPYR…FYKQAPPSQK (73 aa). Residues 90–122 are disordered; sequence TYKPSKKRLPPPFQKLPPFYKQAPPSQKLPRVN.

As to expression, root nodules. In early nodules, expressed only in the interior of the developing nodule with no expression in other nodule tissues, including meristem. In slightly older nodules, expressed in almost all cells of the central zone. In more mature nodules, expression is restricted to the invasion zone.

The protein is Early nodulin-10 (ENOD10) of Medicago sativa (Alfalfa).